The primary structure comprises 283 residues: MNGFFLVNKPEKMTSHDVVFQIKKKFHFDKVGHTGTLDPLASGLLIVCVGKATKLAFLFDKLSKTYQGTFLFNKHYDTLDVKGKLLDTKNIPLNDFAIQTSFASFHQKKYWQIPPMFSAVKIKGQKMYRLARQNQVVDIPPREVFIHHFEKKSLFCHDQVDFLVHVSKGTYIRSLARDLALQLNTYGALLRLQRTAIGTHLLQNAKTIENLELNDLILDSIFFASYDELILNDYLIKLVKNGTYLDQRQIITQKPFIVKDSNKNFVAYYDILDENKYYPRYFF.

Residue D38 is the Nucleophile of the active site.

The protein belongs to the pseudouridine synthase TruB family. Type 1 subfamily.

It catalyses the reaction uridine(55) in tRNA = pseudouridine(55) in tRNA. In terms of biological role, responsible for synthesis of pseudouridine from uracil-55 in the psi GC loop of transfer RNAs. The polypeptide is tRNA pseudouridine synthase B (Aster yellows witches'-broom phytoplasma (strain AYWB)).